A 438-amino-acid chain; its full sequence is MKPLRYTASALALGLALMANAQAVTTIPFWHSMEGELGKEVDSLAQRFNAENPDYKIVPTYKGNYEQNLSAGIAAFRTGNAPAILQVYEVGTATMMASKAIKPVYDVFKEAGIQFDESQFVPTVSGYYSDSKTGHLLSQPFNSSTPVLYYNKDAFKKAGLDPKQPPKTWQDLADYAAKLKASGMKCGYASGWQGWIQLENFSAWNGLPFASKNNGFDGTDAVLEFNKPEQVKHIAMLEEMNKKGDFSYVGRKDESTEKFYNGDCAMTTASSGSLANIREYAKFNYGVGMMPYDADAKDAPQNAIIGGASLWVMQGKDKETYTGVAKFLDFLAKPENAAEWHQKTGYLPITKAAYDLTREQGFYEKNPGADIATRQMLNKPPLPFTKGLRLGNMPQIRVIVDEELESVWTGKKTPQQALDTAVERGNQLLRRFEKSTKS.

Residues 1–23 form the signal peptide; it reads MKPLRYTASALALGLALMANAQA. Residues Tyr-65, Glu-89, Ser-144, Ser-270, Gly-307, Tyr-346, and Arg-397 each coordinate sn-glycerol 3-phosphate.

The protein belongs to the bacterial solute-binding protein 1 family. In terms of assembly, the complex is composed of two ATP-binding proteins (UgpC), two transmembrane proteins (UgpA and UgpE) and a solute-binding protein (UgpB).

It localises to the periplasm. Part of the ABC transporter complex UgpBAEC involved in sn-glycerol-3-phosphate (G3P) import. Binds G3P. This chain is sn-glycerol-3-phosphate-binding periplasmic protein UgpB (ugpB), found in Escherichia coli O1:K1 / APEC.